A 155-amino-acid chain; its full sequence is Ribosome maturation factor RimP (155 aa).

The protein belongs to the RimP family.

Its subcellular location is the cytoplasm. Functionally, required for maturation of 30S ribosomal subunits. The polypeptide is Ribosome maturation factor RimP (Macrococcus caseolyticus (strain JCSC5402) (Macrococcoides caseolyticum)).